The chain runs to 398 residues: Steroid C26-monooxygenase (398 aa).

Position 340 (C340) interacts with heme.

The protein belongs to the cytochrome P450 family. It depends on heme as a cofactor.

The catalysed reaction is cholest-4-en-3-one + 6 reduced [2Fe-2S]-[ferredoxin] + 3 O2 + 5 H(+) = (25R)-3-oxocholest-4-en-26-oate + 6 oxidized [2Fe-2S]-[ferredoxin] + 4 H2O. It carries out the reaction cholest-4-en-3-one + 2 reduced [2Fe-2S]-[ferredoxin] + O2 + 2 H(+) = (25R)-3-oxocholest-4-en-26-ol + 2 oxidized [2Fe-2S]-[ferredoxin] + H2O. It catalyses the reaction (25R)-3-oxocholest-4-en-26-ol + 2 reduced [2Fe-2S]-[ferredoxin] + O2 + 2 H(+) = (25R)-3-oxocholest-4-en-26-al + 2 oxidized [2Fe-2S]-[ferredoxin] + 2 H2O. The enzyme catalyses (25R)-3-oxocholest-4-en-26-al + 2 reduced [2Fe-2S]-[ferredoxin] + O2 + H(+) = (25R)-3-oxocholest-4-en-26-oate + 2 oxidized [2Fe-2S]-[ferredoxin] + H2O. The catalysed reaction is cholesterol + NADPH + O2 + H(+) = 26-hydroxycholesterol + NADP(+) + H2O. It carries out the reaction 26-hydroxycholesterol + 2 reduced [2Fe-2S]-[ferredoxin] + O2 + 2 H(+) = (3beta)-hydroxy-cholest-5-en-26-al + 2 oxidized [2Fe-2S]-[ferredoxin] + 2 H2O. It catalyses the reaction (3beta)-hydroxy-cholest-5-en-26-al + NADPH + O2 = (3beta)-hydroxy-cholest-5-en-26-oate + NADP(+) + H2O. The enzyme catalyses (25S)-3-oxocholest-4-en-26-ol + 2 reduced [2Fe-2S]-[ferredoxin] + O2 + 2 H(+) = (25S)-3-oxocholest-4-en-26-al + 2 oxidized [2Fe-2S]-[ferredoxin] + 2 H2O. The catalysed reaction is (25S)-3-oxocholest-4-en-26-al + 2 reduced [2Fe-2S]-[ferredoxin] + O2 + H(+) = (25S)-3-oxocholest-4-en-26-oate + 2 oxidized [2Fe-2S]-[ferredoxin] + H2O. It participates in steroid metabolism; cholesterol degradation. With respect to regulation, inhibited by econazole, clotrimazole and miconazole. Functionally, involved in the utilization of cholesterol as the sole carbon and energy source by degrading the side chain during infection. Primarily catalyzes the sequential oxidation of the terminal methyl of cholest-4-en-3-one into (25R)-26-hydroxycholest-4-en-3-one (alcohol), (25R)-26-oxocholest-4-en-3-one (aldehyde), to finally yield the carboxylic acid (25R)-3-oxocholest-4-en-26-oate. In vitro, Cyp142 catalyzes with equal preference the oxidation of both (25R)- and (25S)-26-hydroxycholest-4-en-3-one diastereomers to the corresponding carboxylic acid which is a prerequisite for entry into the beta-oxidation pathway. Also able to sequentially oxidize cholesterol itself, not only cholest-4-en-3-one. The sequence is that of Steroid C26-monooxygenase (cyp142) from Mycobacterium tuberculosis (strain ATCC 25618 / H37Rv).